Here is a 363-residue protein sequence, read N- to C-terminus: Ribosomal RNA small subunit methyltransferase H (363 aa).

S-adenosyl-L-methionine contacts are provided by residues 55–57, D75, D122, and Q129; that span reads GGH.

It belongs to the methyltransferase superfamily. RsmH family.

The protein localises to the cytoplasm. The enzyme catalyses cytidine(1402) in 16S rRNA + S-adenosyl-L-methionine = N(4)-methylcytidine(1402) in 16S rRNA + S-adenosyl-L-homocysteine + H(+). In terms of biological role, specifically methylates the N4 position of cytidine in position 1402 (C1402) of 16S rRNA. The protein is Ribosomal RNA small subunit methyltransferase H of Bordetella petrii (strain ATCC BAA-461 / DSM 12804 / CCUG 43448).